The sequence spans 681 residues: Protein NirI (681 aa).

Positions 1 to 30 (MAMPGKSSHAPSRLLLALLTLILLALPARP) are cleaved as a signal peptide. Transmembrane regions (helical) follow at residues 394–414 (IPGI…LFGQ), 436–456 (LVVL…VAFL), 468–488 (FLIE…LLFW), 535–555 (TLFV…LILA), and 568–588 (FLRA…GLFI).

This sequence to P.stutzeri NosR.

Its subcellular location is the cell membrane. This Paracoccus denitrificans (strain Pd 1222) protein is Protein NirI (nirI).